Reading from the N-terminus, the 90-residue chain is MPQLPGETVSFKLERDDENKVRAILHTVYQALQEKGYNPINQLVGYMISGEPAYITSHSEARNLICKVDRDEIMEVLLKSYLQNSMGKGE.

Belongs to the UPF0297 family.

This Syntrophomonas wolfei subsp. wolfei (strain DSM 2245B / Goettingen) protein is UPF0297 protein Swol_0469.